The following is a 145-amino-acid chain: Bacilliredoxin SAOUHSC_01610 (145 aa).

Belongs to the bacilliredoxin family.

In Staphylococcus aureus (strain NCTC 8325 / PS 47), this protein is Bacilliredoxin SAOUHSC_01610.